We begin with the raw amino-acid sequence, 94 residues long: Small ribosomal subunit protein bS16 (94 aa).

It belongs to the bacterial ribosomal protein bS16 family.

The chain is Small ribosomal subunit protein bS16 from Thermosipho africanus (strain TCF52B).